The sequence spans 178 residues: Ribosome maturation factor RimM (178 aa).

The PRC barrel domain occupies 99–178 (QGEFYWRDLI…EITVDWDPGF (80 aa)).

Belongs to the RimM family. As to quaternary structure, binds ribosomal protein uS19.

The protein localises to the cytoplasm. An accessory protein needed during the final step in the assembly of 30S ribosomal subunit, possibly for assembly of the head region. Essential for efficient processing of 16S rRNA. May be needed both before and after RbfA during the maturation of 16S rRNA. It has affinity for free ribosomal 30S subunits but not for 70S ribosomes. The polypeptide is Ribosome maturation factor RimM (Pseudoalteromonas translucida (strain TAC 125)).